A 294-amino-acid chain; its full sequence is 4-hydroxybenzoate octaprenyltransferase (294 aa).

7 helical membrane-spanning segments follow: residues 37–57, 101–121, 142–162, 169–189, 219–239, 241–261, and 271–293; these read LWAMWMAAGGPPGWTLFWIFF, LAVAAVLALIALALILPLNAL, FFAIPQAYLGIAFGFGIPMAF, VPFVAWLMLLANVFWAIAYDT, IMICYAVFLGLMAWAGSLLGL, WPYYAGLVAAAGMAGYHYTLI, and AAFRHNNWLGACVFAGTFVAYLL.

The protein belongs to the UbiA prenyltransferase family. Mg(2+) is required as a cofactor.

The protein resides in the cell inner membrane. It catalyses the reaction all-trans-octaprenyl diphosphate + 4-hydroxybenzoate = 4-hydroxy-3-(all-trans-octaprenyl)benzoate + diphosphate. It functions in the pathway cofactor biosynthesis; ubiquinone biosynthesis. Functionally, catalyzes the prenylation of para-hydroxybenzoate (PHB) with an all-trans polyprenyl group. Mediates the second step in the final reaction sequence of ubiquinone-8 (UQ-8) biosynthesis, which is the condensation of the polyisoprenoid side chain with PHB, generating the first membrane-bound Q intermediate 3-octaprenyl-4-hydroxybenzoate. The sequence is that of 4-hydroxybenzoate octaprenyltransferase from Cupriavidus metallidurans (strain ATCC 43123 / DSM 2839 / NBRC 102507 / CH34) (Ralstonia metallidurans).